The following is a 323-amino-acid chain: Pseudouridine-5'-phosphate glycosidase (323 aa).

Catalysis depends on glutamate 43, which acts as the Proton donor. Positions 104 and 124 each coordinate substrate. Aspartate 156 provides a ligand contact to Mn(2+). Residue 158-160 (SAD) participates in substrate binding. Lysine 177 (nucleophile) is an active-site residue.

It belongs to the pseudouridine-5'-phosphate glycosidase family. In terms of assembly, homotrimer. It depends on Mn(2+) as a cofactor.

It carries out the reaction D-ribose 5-phosphate + uracil = psi-UMP + H2O. Catalyzes the reversible cleavage of pseudouridine 5'-phosphate (PsiMP) to ribose 5-phosphate and uracil. Functions biologically in the cleavage direction, as part of a pseudouridine degradation pathway. The sequence is that of Pseudouridine-5'-phosphate glycosidase from Streptomyces griseus subsp. griseus (strain JCM 4626 / CBS 651.72 / NBRC 13350 / KCC S-0626 / ISP 5235).